The primary structure comprises 378 residues: UDP-N-acetylenolpyruvoylglucosamine reductase (378 aa).

In terms of domain architecture, FAD-binding PCMH-type spans 15–185 (VGGTPERLLE…LSVDLELADH (171 aa)). Arg163 is a catalytic residue. Ser248 acts as the Proton donor in catalysis. Residue Glu370 is part of the active site.

It belongs to the MurB family. FAD serves as cofactor.

Its subcellular location is the cytoplasm. It carries out the reaction UDP-N-acetyl-alpha-D-muramate + NADP(+) = UDP-N-acetyl-3-O-(1-carboxyvinyl)-alpha-D-glucosamine + NADPH + H(+). It functions in the pathway cell wall biogenesis; peptidoglycan biosynthesis. Its function is as follows. Cell wall formation. This Leifsonia xyli subsp. xyli (strain CTCB07) protein is UDP-N-acetylenolpyruvoylglucosamine reductase.